The sequence spans 113 residues: T cell receptor alpha variable 36/delta variable 7 (113 aa).

The first 21 residues, 1-21 (MMKCPQALLAIFWLLLSWVSS), serve as a signal peptide directing secretion. The Ig-like domain occupies 23 to 113 (DKVVQSPLSL…DSAIYLCAVE (91 aa)). N-linked (GlcNAc...) asparagine glycans are attached at residues N43 and N96. The cysteines at positions 44 and 110 are disulfide-linked.

Alpha-beta TR is a heterodimer composed of an alpha and beta chain; disulfide-linked. The alpha-beta TR is associated with the transmembrane signaling CD3 coreceptor proteins to form the TR-CD3 (TcR or TCR). The assembly of alpha-beta TR heterodimers with CD3 occurs in the endoplasmic reticulum where a single alpha-beta TR heterodimer associates with one CD3D-CD3E heterodimer, one CD3G-CD3E heterodimer and one CD247 homodimer forming a stable octameric structure. CD3D-CD3E and CD3G-CD3E heterodimers preferentially associate with TR alpha and TR beta chains, respectively. The association of the CD247 homodimer is the last step of TcR assembly in the endoplasmic reticulum and is required for transport to the cell surface.

The protein resides in the cell membrane. Its function is as follows. V region of the variable domain of T cell receptor (TR) alpha chain that participates in the antigen recognition. Alpha-beta T cell receptors are antigen specific receptors which are essential to the immune response and are present on the cell surface of T lymphocytes. Recognize peptide-major histocompatibility (MH) (pMH) complexes that are displayed by antigen presenting cells (APC), a prerequisite for efficient T cell adaptive immunity against pathogens. Binding of alpha-beta TR to pMH complex initiates TR-CD3 clustering on the cell surface and intracellular activation of LCK that phosphorylates the ITAM motifs of CD3G, CD3D, CD3E and CD247 enabling the recruitment of ZAP70. In turn ZAP70 phosphorylates LAT, which recruits numerous signaling molecules to form the LAT signalosome. The LAT signalosome propagates signal branching to three major signaling pathways, the calcium, the mitogen-activated protein kinase (MAPK) kinase and the nuclear factor NF-kappa-B (NF-kB) pathways, leading to the mobilization of transcription factors that are critical for gene expression and essential for T cell growth and differentiation. The T cell repertoire is generated in the thymus, by V-(D)-J rearrangement. This repertoire is then shaped by intrathymic selection events to generate a peripheral T cell pool of self-MH restricted, non-autoaggressive T cells. Post-thymic interaction of alpha-beta TR with the pMH complexes shapes TR structural and functional avidity. The sequence is that of T cell receptor alpha variable 36/delta variable 7 from Homo sapiens (Human).